The chain runs to 196 residues: Holliday junction branch migration complex subunit RuvA (196 aa).

Residues 1-63 (MLDFIKGEIV…EETHQLFGFI (63 aa)) are domain I. A domain II region spans residues 64 to 142 (DKKERQLFTH…PDNIPSSDTI (79 aa)). Positions 143–146 (ITNI) are flexible linker. Residues 146–196 (ISSNITKEAITALITLGFSQSASQKVVNKIVSNNSSSTTIEQIIKKALKLL) form a domain III region.

Belongs to the RuvA family. Homotetramer. Forms an RuvA(8)-RuvB(12)-Holliday junction (HJ) complex. HJ DNA is sandwiched between 2 RuvA tetramers; dsDNA enters through RuvA and exits via RuvB. An RuvB hexamer assembles on each DNA strand where it exits the tetramer. Each RuvB hexamer is contacted by two RuvA subunits (via domain III) on 2 adjacent RuvB subunits; this complex drives branch migration. In the full resolvosome a probable DNA-RuvA(4)-RuvB(12)-RuvC(2) complex forms which resolves the HJ.

Its subcellular location is the cytoplasm. Its function is as follows. The RuvA-RuvB-RuvC complex processes Holliday junction (HJ) DNA during genetic recombination and DNA repair, while the RuvA-RuvB complex plays an important role in the rescue of blocked DNA replication forks via replication fork reversal (RFR). RuvA specifically binds to HJ cruciform DNA, conferring on it an open structure. The RuvB hexamer acts as an ATP-dependent pump, pulling dsDNA into and through the RuvAB complex. HJ branch migration allows RuvC to scan DNA until it finds its consensus sequence, where it cleaves and resolves the cruciform DNA. The polypeptide is Holliday junction branch migration complex subunit RuvA (Azobacteroides pseudotrichonymphae genomovar. CFP2).